Here is a 198-residue protein sequence, read N- to C-terminus: Syndecan-4 (198 aa).

A signal peptide spans 1–18; sequence MAPARLFALLLFFVGGVA. The Extracellular portion of the chain corresponds to 19 to 145; it reads ESIRETEVID…QGSNIFERTE (127 aa). O-linked (Xyl...) (glycosaminoglycan) serine glycosylation is found at serine 39, serine 61, and serine 63. O-linked (Xyl...) (chondroitin sulfate) serine glycosylation is present at serine 95. A helical transmembrane segment spans residues 146–170; sequence VLAALIVGGIVGILFAVFLILLLMY. At 171–198 the chain is on the cytoplasmic side; sequence RMKKKDEGSYDLGKKPIYKKAPTNEFYA.

This sequence belongs to the syndecan proteoglycan family. As to quaternary structure, homodimer. Interacts (via its cytoplasmic domain) with GIPC (via its PDZ domain). Interacts (via its cytoplasmic domain) with NUDT16L1. Interacts with CDCP1 and SDCBP. Interacts with DNM2; this interaction is markedly enhanced at focal ahesion site upon induction of focal adhesions and stress-fiber formation. Post-translationally, shedding is enhanced by a number of factors such as heparanase, thrombin or EGF. Also by stress and wound healing. PMA-mediated shedding is inhibited by TIMP3. In terms of processing, O-glycosylated; contains both chondroitin sulfate and heparan sulfate. Ser-39, Ser-61 and Ser-63 can all be modified by either chondroitin sulfate or heparan sulfate, and the protein exists in forms that contain only chondroitin sulfate, only heparan sulfate and both chondroitin sulfate and heparan sulfate. As to expression, detected in fibroblasts (at protein level). Also expressed in epithelial cells.

It is found in the membrane. Its subcellular location is the secreted. Its function is as follows. Cell surface proteoglycan which regulates exosome biogenesis in concert with SDCBP and PDCD6IP. The polypeptide is Syndecan-4 (Homo sapiens (Human)).